A 1357-amino-acid chain; its full sequence is DNA-directed RNA polymerase subunit beta (1357 aa).

Belongs to the RNA polymerase beta chain family. The RNAP catalytic core consists of 2 alpha, 1 beta, 1 beta' and 1 omega subunit. When a sigma factor is associated with the core the holoenzyme is formed, which can initiate transcription.

The enzyme catalyses RNA(n) + a ribonucleoside 5'-triphosphate = RNA(n+1) + diphosphate. Its function is as follows. DNA-dependent RNA polymerase catalyzes the transcription of DNA into RNA using the four ribonucleoside triphosphates as substrates. The polypeptide is DNA-directed RNA polymerase subunit beta (Hahella chejuensis (strain KCTC 2396)).